We begin with the raw amino-acid sequence, 379 residues long: Succinate--CoA ligase [ADP-forming] subunit beta (379 aa).

One can recognise an ATP-grasp domain in the interval 9–237 (RDILARYGIP…SSDEPEAEQR (229 aa)). ATP-binding positions include K45, 52–54 (GRG), I94, and E99. Residues N192 and D206 each contribute to the Mg(2+) site. Substrate is bound by residues N257 and 314-316 (GIT).

The protein belongs to the succinate/malate CoA ligase beta subunit family. In terms of assembly, heterotetramer of two alpha and two beta subunits. It depends on Mg(2+) as a cofactor.

The catalysed reaction is succinate + ATP + CoA = succinyl-CoA + ADP + phosphate. It carries out the reaction GTP + succinate + CoA = succinyl-CoA + GDP + phosphate. It participates in carbohydrate metabolism; tricarboxylic acid cycle; succinate from succinyl-CoA (ligase route): step 1/1. Succinyl-CoA synthetase functions in the citric acid cycle (TCA), coupling the hydrolysis of succinyl-CoA to the synthesis of either ATP or GTP and thus represents the only step of substrate-level phosphorylation in the TCA. The beta subunit provides nucleotide specificity of the enzyme and binds the substrate succinate, while the binding sites for coenzyme A and phosphate are found in the alpha subunit. This is Succinate--CoA ligase [ADP-forming] subunit beta from Roseiflexus sp. (strain RS-1).